Here is a 555-residue protein sequence, read N- to C-terminus: Potassium-transporting ATPase potassium-binding subunit (555 aa).

10 consecutive transmembrane segments (helical) span residues 2–22 (IWVA…PTGI), 60–80 (QYAL…YFIF), 130–150 (IGIT…VMAF), 173–193 (VFLP…VPQT), 246–266 (MSNI…PFTY), 278–298 (ILFV…TTSE), 374–394 (AGFV…GLMV), 412–432 (LIAV…ALAL), 483–503 (LVMF…AASL), and 525–545 (GIFI…MLVL).

The protein belongs to the KdpA family. The system is composed of three essential subunits: KdpA, KdpB and KdpC.

Its subcellular location is the cell membrane. Part of the high-affinity ATP-driven potassium transport (or Kdp) system, which catalyzes the hydrolysis of ATP coupled with the electrogenic transport of potassium into the cytoplasm. This subunit binds the extracellular potassium ions and delivers the ions to the membrane domain of KdpB through an intramembrane tunnel. In Bacillus thuringiensis (strain Al Hakam), this protein is Potassium-transporting ATPase potassium-binding subunit.